The chain runs to 206 residues: Alpha-amylase/trypsin inhibitor (206 aa).

8 disulfide bridges follow: Cys9-Cys205, Cys51-Cys61, Cys66-Cys72, Cys118-Cys194, Cys124-Cys177, Cys132-Cys142, Cys146-Cys155, and Cys156-Cys164.

Belongs to the thaumatin family.

Inhibits both trypsin and alpha-amylase. Inhibits the growth of some plant fungal pathogens. The chain is Alpha-amylase/trypsin inhibitor from Zea mays (Maize).